The sequence spans 639 residues: MALANTGSEAEPVEQSSHPEIEQHSTKVLMLGALGVVYGDIGTSPIYAFREALVASSHGTVAQRGDILGVLSLIIWSLTIIVTIKYIMFVLRADNRGEGGVLSLMALARGSFPKRSAVILGIGIVGASLFFGDAVITPAISVLSAVEGMNVVTPTFQPYVVPLTLVILAVVFAVQRFGTGGVGLVFGPVTAVWFLAIGLSGLKHIIADPEILWAISPHYIVAFLIHSPDVAFVTIGAIFLAVTGAEALYADLGHFGRKPIVLAWLSIVFPCLLLNYAGQGAFVLAKNGVVGHPFFEMNEGWALIPMVVLATAATVIASQAVISGAFSLTRQAVQLNMLPRLEILHTSEKQSGQIYMPRVNLLLALVVMMLVVGFGESSKLASAYGISVTGNMLVTTVLLYVVMTRIWKWRLWVAISLTVLFAFIDIGFFASNIVKVFEGGWASLLVAFTIVLGMWTWVRGSRYLFDKTRRNEIPLDFLAGNLLKKKPQLVSGTAVFLTSDPLSAPTALMHSLKHYKVLHEQNVILSVVTAPQPVVPDSDRVKMETVNELFMRVTLTFGYMEQPNIPRALAICRKQGWKFDIMTTSFFLSRRSLKASPNSGMPVWQDRLFIGLARTAADATEYFQIPTGRVVEIGTQVAI.

The span at 1-16 shows a compositional bias: polar residues; the sequence is MALANTGSEAEPVEQS. Residues 1 to 21 are disordered; that stretch reads MALANTGSEAEPVEQSSHPEI. The next 12 helical transmembrane spans lie at 29 to 49, 67 to 87, 117 to 137, 154 to 174, 182 to 202, 220 to 240, 260 to 280, 302 to 322, 354 to 374, 383 to 403, 411 to 431, and 436 to 456; these read LMLG…IYAF, ILGV…IKYI, AVIL…AVIT, PTFQ…VFAV, VGLV…LSGL, IVAF…AIFL, IVLA…AGQG, ALIP…QAVI, IYMP…VVGF, AYGI…YVVM, LWVA…FFAS, and VFEG…GMWT.

Belongs to the HAK/KUP transporter (TC 2.A.72) family.

The protein resides in the cell inner membrane. It carries out the reaction K(+)(in) + H(+)(in) = K(+)(out) + H(+)(out). In terms of biological role, transport of potassium into the cell. Likely operates as a K(+):H(+) symporter. This is Probable potassium transport system protein Kup 1 from Mesorhizobium japonicum (strain LMG 29417 / CECT 9101 / MAFF 303099) (Mesorhizobium loti (strain MAFF 303099)).